The chain runs to 487 residues: Glutamyl-tRNA(Gln) amidotransferase subunit A (487 aa).

Residues lysine 79 and serine 158 each act as charge relay system in the active site. Serine 182 functions as the Acyl-ester intermediate in the catalytic mechanism.

Belongs to the amidase family. GatA subfamily. As to quaternary structure, heterotrimer of A, B and C subunits.

The enzyme catalyses L-glutamyl-tRNA(Gln) + L-glutamine + ATP + H2O = L-glutaminyl-tRNA(Gln) + L-glutamate + ADP + phosphate + H(+). Allows the formation of correctly charged Gln-tRNA(Gln) through the transamidation of misacylated Glu-tRNA(Gln) in organisms which lack glutaminyl-tRNA synthetase. The reaction takes place in the presence of glutamine and ATP through an activated gamma-phospho-Glu-tRNA(Gln). The polypeptide is Glutamyl-tRNA(Gln) amidotransferase subunit A (Ehrlichia ruminantium (strain Welgevonden)).